The following is a 139-amino-acid chain: Actin-depolymerizing factor 1 (139 aa).

Residues 5 to 139 (SSGLAVNDEC…SLDIVRSRTN (135 aa)) enclose the ADF-H domain.

The protein belongs to the actin-binding proteins ADF family. As to expression, expressed in pollen.

Its function is as follows. Actin-depolymerizing protein. Severs actin filaments (F-actin) and binds to actin monomers. The polypeptide is Actin-depolymerizing factor 1 (ADF1) (Zea mays (Maize)).